A 1098-amino-acid polypeptide reads, in one-letter code: Transcription elongation regulator 1 (1098 aa).

A compositionally biased stretch (basic and acidic residues) spans 1–15; sequence MAERGGDGGESERFN. The interval 1–105 is disordered; the sequence is MAERGGDGGE…RPPFMPPPMS (105 aa). Residue S11 is modified to Phosphoserine. R20 is subject to Omega-N-methylarginine. Asymmetric dimethylarginine occurs at positions 28, 30, 41, and 48. The segment covering 32 to 105 has biased composition (pro residues); sequence PAPPPNAVMR…RPPFMPPPMS (74 aa). The WW 1 domain maps to 131–164; the sequence is PPTEEIWVENKTPDGKVYYYNARTRESAWTKPDG. Residues 184–244 are a coiled coil; it reads QAQAQAQAQA…AQAQAQAQVQ (61 aa). A compositionally biased stretch (low complexity) spans 259–333; it reads STPTTSSPAP…PTATPVQTVP (75 aa). A disordered region spans residues 259-348; that stretch reads STPTTSSPAP…TLPPAVPHSV (90 aa). Residues 334–344 are compositionally biased toward pro residues; the sequence is QPHPQTLPPAV. The WW 2 domain occupies 429–462; that stretch reads ATAVSEWTEYKTADGKTYYYNNRTLESTWEKPQE. 2 stretches are compositionally biased toward basic and acidic residues: residues 469–481 and 496–506; these read LEEKIKEPIKEPS and EEPIKEIKEEP. The disordered stretch occupies residues 469–526; sequence LEEKIKEPIKEPSEEPLPMETEEEDPKEEPIKEIKEEPKEEEMTEEEKAAQKAKPVAT. Residues K503 and K507 each participate in a glycyl lysine isopeptide (Lys-Gly) (interchain with G-Cter in SUMO2) cross-link. Residues 528–561 form the WW 3 domain; sequence PIPGTPWCVVWTGDERVFFYNPTTRLSMWDRPDD. The stretch at 606-655 forms a coiled coil; the sequence is AIKEEQELMEEINEDEPVKAKKRKRDDNKDIDSEKEAAMEAEIKAARERA. K608 is covalently cross-linked (Glycyl lysine isopeptide (Lys-Gly) (interchain with G-Cter in SUMO2)). The disordered stretch occupies residues 615–640; the sequence is EEINEDEPVKAKKRKRDDNKDIDSEK. The short motif at 626-630 is the Nuclear localization signal element; the sequence is KKRKR. Residues 630 to 640 show a composition bias toward basic and acidic residues; it reads RDDNKDIDSEK. S638 is subject to Phosphoserine. 3 consecutive FF domains span residues 659–712, 725–779, and 791–846; these read LEAR…YVKT, IMQA…FVAA, and RGEK…YIEK. S834 bears the Phosphoserine mark. Residues 844-906 are a coiled coil; that stretch reads IEKIAKNLDS…EEAIQNFKAL (63 aa). The segment at 870–895 is disordered; sequence REREREVQKARSEQTKEIDREREQHK. FF domains are found at residues 896 to 952, 954 to 1010, and 1012 to 1077; these read REEA…HIEA, TKKK…YIRD, and YITA…YVDD. S933 is modified (phosphoserine). The segment at 1076 to 1098 is disordered; the sequence is DDLDRRGPPPPPTASEPTRRSTK.

As to quaternary structure, binds formin. Interacts (via the second WW domain) with TREX1 (via proline-rich region). Binds RNA polymerase II, HD and SF1. Detected in brain neurons.

The protein localises to the nucleus. Transcription factor that binds RNA polymerase II and inhibits the elongation of transcripts from target promoters. Regulates transcription elongation in a TATA box-dependent manner. Necessary for TAT-dependent activation of the human immunodeficiency virus type 1 (HIV-1) promoter. The polypeptide is Transcription elongation regulator 1 (TCERG1) (Homo sapiens (Human)).